The sequence spans 443 residues: ATP-dependent protease ATPase subunit HslU (443 aa).

ATP is bound by residues isoleucine 18, 60-65 (GVGKTE), aspartate 256, glutamate 321, and arginine 393.

It belongs to the ClpX chaperone family. HslU subfamily. In terms of assembly, a double ring-shaped homohexamer of HslV is capped on each side by a ring-shaped HslU homohexamer. The assembly of the HslU/HslV complex is dependent on binding of ATP.

It is found in the cytoplasm. Functionally, ATPase subunit of a proteasome-like degradation complex; this subunit has chaperone activity. The binding of ATP and its subsequent hydrolysis by HslU are essential for unfolding of protein substrates subsequently hydrolyzed by HslV. HslU recognizes the N-terminal part of its protein substrates and unfolds these before they are guided to HslV for hydrolysis. The polypeptide is ATP-dependent protease ATPase subunit HslU (Wigglesworthia glossinidia brevipalpis).